The following is a 21-amino-acid chain: Bradykinin-potentiating peptide K12 (21 aa).

Positions 1 to 21 (LRDYANRVINGGPVEAAGPPA) are disordered.

In terms of tissue distribution, expressed by the venom gland.

It is found in the secreted. Functionally, inhibits angiotensin-converting enzyme (ACE), but does not serve as substrate for the enzyme. Potentiate bradykinin (BK) on the isolated guinea pig ileum as well as the isolated rat uterus for contraction. Also potentiates in vivo the depressor effect of BK on arterial blood pressure in the normotensive anesthetized rat. Intracerebroventricular injection into mice does not show toxic activity. This is Bradykinin-potentiating peptide K12 from Buthus occitanus (Common European scorpion).